Here is a 98-residue protein sequence, read N- to C-terminus: Large ribosomal subunit protein uL23 (98 aa).

This sequence belongs to the universal ribosomal protein uL23 family. Part of the 50S ribosomal subunit. Contacts protein L29, and trigger factor when it is bound to the ribosome.

Its function is as follows. One of the early assembly proteins it binds 23S rRNA. One of the proteins that surrounds the polypeptide exit tunnel on the outside of the ribosome. Forms the main docking site for trigger factor binding to the ribosome. This Herpetosiphon aurantiacus (strain ATCC 23779 / DSM 785 / 114-95) protein is Large ribosomal subunit protein uL23.